The following is a 352-amino-acid chain: Cuticle collagen dpy-17 (352 aa).

The signal sequence occupies residues 1–29 (MSVFAGYAACTLGAVSMLLCVSLVPQVYQ). Residues 61-64 (RVRR) are furin-like endopeptidase recognition region. Disordered stretches follow at residues 73-143 (GGYG…GPGD) and 156-352 (GPAG…GYRN). Residues 87–97 (GPHGGFPGGPQ) are compositionally biased toward gly residues. Triple-helical region regions lie at residues 156-182 (GPAGPKGTPGHDGPDGIPGVPGVDGED), 202-264 (GPQG…DVEH), 267-290 (GLPGAKGTPGAPGESGDQGEQGDR), and 294-329 (GIAGPPGERGPQGEKGDDGPNGAAGSPGEEGEPGQD). Positions 202–259 (GPQGPPGSQGKPGARGMRGARGQAAMPGRDGSPGMPGSLGPIGPPGAAGEEGPTGEPG) constitute a Collagen-like domain. Over residues 207–259 (PGSQGKPGARGMRGARGQAAMPGRDGSPGMPGSLGPIGPPGAAGEEGPTGEPG) the composition is skewed to low complexity. The segment covering 337–352 (QRNTNAAVSGNQGYRN) has biased composition (polar residues).

This sequence belongs to the cuticular collagen family. As to quaternary structure, collagen polypeptide chains are complexed within the cuticle by disulfide bonds and other types of covalent cross-links.

It is found in the secreted. The protein localises to the extracellular space. In terms of biological role, secreted collagen that forms part of the nematode cuticle, which functions as an exoskeleton and a barrier to protect the worm from its environment. Secretion and subsequent incorporation into the cuticle is likely mediated by bli-4, which probably cleaves at the N-terminal consensus furin cleavage site. This chain is Cuticle collagen dpy-17, found in Caenorhabditis elegans.